Here is a 553-residue protein sequence, read N- to C-terminus: Glycerol kinase 2 (553 aa).

Threonine 20 contacts substrate. An ATP-binding site is contributed by arginine 24. Substrate is bound by residues arginine 94, tyrosine 148, and aspartate 259. Residues threonine 281, glycine 326, and 427–431 (GMTNN) contribute to the ATP site. A helical membrane pass occupies residues 526–546 (IFSSLPLGFFIVSSMVMLIGA).

It belongs to the FGGY kinase family. Interacts with ARMC12. Interacts with PLD6. In terms of tissue distribution, testis-specific. Expressed in the midpiece of spermatozoa.

It localises to the mitochondrion outer membrane. Its subcellular location is the cytoplasm. It carries out the reaction glycerol + ATP = sn-glycerol 3-phosphate + ADP + H(+). It functions in the pathway polyol metabolism; glycerol degradation via glycerol kinase pathway; sn-glycerol 3-phosphate from glycerol: step 1/1. Key enzyme in the regulation of glycerol uptake and metabolism. Essential for male fertility and sperm mitochondrial sheath formation. Required for proper arrangement of crescent-like mitochondria to form the mitochondrial sheath during spermatogenesis. Can induce mitochondrial clustering through interactions with PLD6 and up-regulation of phosphatidic acid synthesis in the mitochondria. The protein is Glycerol kinase 2 (GK2) of Homo sapiens (Human).